The following is a 373-amino-acid chain: Pulmonary surfactant-associated protein B (373 aa).

An N-terminal signal peptide occupies residues 1-22 (MAKSHLLPWLLLLPILCGPGTA). Residues 23 to 187 (AAITYSLACA…PQTQDLSEQL (165 aa)) constitute a propeptide that is removed on maturation. Residues 24–64 (AITYSLACAQGPEFWCQSLEQALQCRALGHCLQEVWGHVEA) enclose the Saposin A-type domain. Saposin B-type domains lie at 64–146 (ADDL…KPRH), 191–268 (PIPY…SSED), and 287–362 (QDSD…AAPF). Cystine bridges form between cysteine 68–cysteine 142, cysteine 71–cysteine 136, cysteine 99–cysteine 111, cysteine 195–cysteine 264, cysteine 198–cysteine 258, cysteine 222–cysteine 233, cysteine 291–cysteine 358, cysteine 294–cysteine 352, and cysteine 317–cysteine 327. Asparagine 73 carries N-linked (GlcNAc...) asparagine glycosylation. Residues 267-373 (EDSAGPALPA…PLQCVHSPHF (107 aa)) constitute a propeptide that is removed on maturation. A glycan (N-linked (GlcNAc...) asparagine) is linked at asparagine 303.

In terms of assembly, homodimer; disulfide-linked.

It is found in the secreted. It localises to the extracellular space. The protein resides in the surface film. Pulmonary surfactant-associated proteins promote alveolar stability by lowering the surface tension at the air-liquid interface in the peripheral air spaces. SP-B increases the collapse pressure of palmitic acid to nearly 70 millinewtons per meter. The sequence is that of Pulmonary surfactant-associated protein B (SFTPB) from Bos taurus (Bovine).